A 267-amino-acid chain; its full sequence is DCN1-like protein 2 (267 aa).

The tract at residues 1-48 is disordered; it reads MTRKYTKKSSGSTASTTNSTAEIVDLTTSTSSVGKKRKSPDEKAQPIT. Residues 8 to 21 are compositionally biased toward low complexity; sequence KSSGSTASTTNSTA. The DCUN1 domain maps to 75–262; the sequence is HYTYLYTYIF…LLDQFSEWVQ (188 aa).

The protein is DCN1-like protein 2 of Dictyostelium discoideum (Social amoeba).